A 489-amino-acid chain; its full sequence is COX3 mRNA-specific translational activator PET494 (489 aa).

The protein localises to the mitochondrion inner membrane. In terms of biological role, required for the expression of the mitochondrial gene for cytochrome c oxidase subunit III (COX3). This chain is COX3 mRNA-specific translational activator PET494 (PET494), found in Saccharomyces cerevisiae (strain ATCC 204508 / S288c) (Baker's yeast).